A 237-amino-acid polypeptide reads, in one-letter code: Demethylmenaquinone methyltransferase (237 aa).

S-adenosyl-L-methionine is bound by residues Thr-58, Asp-79, and 106–107 (NA).

The protein belongs to the class I-like SAM-binding methyltransferase superfamily. MenG/UbiE family.

The enzyme catalyses a 2-demethylmenaquinol + S-adenosyl-L-methionine = a menaquinol + S-adenosyl-L-homocysteine + H(+). It functions in the pathway quinol/quinone metabolism; menaquinone biosynthesis; menaquinol from 1,4-dihydroxy-2-naphthoate: step 2/2. Methyltransferase required for the conversion of demethylmenaquinol (DMKH2) to menaquinol (MKH2). This chain is Demethylmenaquinone methyltransferase, found in Bacillus cereus (strain ATCC 10987 / NRS 248).